A 150-amino-acid polypeptide reads, in one-letter code: Large ribosomal subunit protein bL9 (150 aa).

Belongs to the bacterial ribosomal protein bL9 family.

In terms of biological role, binds to the 23S rRNA. The protein is Large ribosomal subunit protein bL9 of Cupriavidus metallidurans (strain ATCC 43123 / DSM 2839 / NBRC 102507 / CH34) (Ralstonia metallidurans).